Consider the following 367-residue polypeptide: Phosphoribosylaminoimidazole-succinocarboxamide synthase (367 aa).

Belongs to the SAICAR synthetase family.

The catalysed reaction is 5-amino-1-(5-phospho-D-ribosyl)imidazole-4-carboxylate + L-aspartate + ATP = (2S)-2-[5-amino-1-(5-phospho-beta-D-ribosyl)imidazole-4-carboxamido]succinate + ADP + phosphate + 2 H(+). It participates in purine metabolism; IMP biosynthesis via de novo pathway; 5-amino-1-(5-phospho-D-ribosyl)imidazole-4-carboxamide from 5-amino-1-(5-phospho-D-ribosyl)imidazole-4-carboxylate: step 1/2. This Shewanella baltica (strain OS223) protein is Phosphoribosylaminoimidazole-succinocarboxamide synthase.